The sequence spans 496 residues: Apolipoprotein N-acyltransferase (496 aa).

Helical transmembrane passes span 23-43, 50-70, 84-104, 126-146, 171-191, and 205-225; these read GIAT…FILW, LANF…LYEL, LIIS…LVYL, LTIK…ILSQ, WIGA…IYLI, and FLFG…TNPI. In terms of domain architecture, CN hydrolase spans 236–464; that stretch reads WQTNMPTREK…NDVVNPNFSI (229 aa). The active-site Proton acceptor is the Glu-276. Lys-325 is an active-site residue. The Nucleophile role is filled by Cys-374. Residues 476–496 form a helical membrane-spanning segment; that stretch reads PLFLLCLFLIGLNLYFGKFTN.

The protein belongs to the CN hydrolase family. Apolipoprotein N-acyltransferase subfamily.

It localises to the cell inner membrane. It carries out the reaction N-terminal S-1,2-diacyl-sn-glyceryl-L-cysteinyl-[lipoprotein] + a glycerophospholipid = N-acyl-S-1,2-diacyl-sn-glyceryl-L-cysteinyl-[lipoprotein] + a 2-acyl-sn-glycero-3-phospholipid + H(+). The protein operates within protein modification; lipoprotein biosynthesis (N-acyl transfer). Catalyzes the phospholipid dependent N-acylation of the N-terminal cysteine of apolipoprotein, the last step in lipoprotein maturation. This chain is Apolipoprotein N-acyltransferase, found in Prochlorococcus marinus subsp. pastoris (strain CCMP1986 / NIES-2087 / MED4).